The following is a 157-amino-acid chain: S-ribosylhomocysteine lyase (157 aa).

Positions 54, 58, and 126 each coordinate Fe cation.

The protein belongs to the LuxS family. In terms of assembly, homodimer. It depends on Fe cation as a cofactor.

The catalysed reaction is S-(5-deoxy-D-ribos-5-yl)-L-homocysteine = (S)-4,5-dihydroxypentane-2,3-dione + L-homocysteine. Involved in the synthesis of autoinducer 2 (AI-2) which is secreted by bacteria and is used to communicate both the cell density and the metabolic potential of the environment. The regulation of gene expression in response to changes in cell density is called quorum sensing. Catalyzes the transformation of S-ribosylhomocysteine (RHC) to homocysteine (HC) and 4,5-dihydroxy-2,3-pentadione (DPD). The chain is S-ribosylhomocysteine lyase from Bacillus velezensis (strain DSM 23117 / BGSC 10A6 / LMG 26770 / FZB42) (Bacillus amyloliquefaciens subsp. plantarum).